Consider the following 283-residue polypeptide: 1-deoxypentalenic acid 11-beta-hydroxylase (283 aa).

Position 117 (R117) interacts with substrate. Residues H135 and D137 each coordinate Fe cation. 2-oxoglutarate contacts are provided by residues 135-137 (HQD) and W151. Position 186 (R186) interacts with substrate. Fe cation is bound at residue H224. Residues S226 and R238 each contribute to the 2-oxoglutarate site. The segment at 260-283 (WPESAKDASKGILSKITGTPTTAE) is disordered.

This sequence belongs to the PhyH family. Requires Fe cation as cofactor. L-ascorbate is required as a cofactor.

It catalyses the reaction 1-deoxypentalenate + 2-oxoglutarate + O2 = 1-deoxy-11beta-hydroxypentalenate + succinate + CO2. The protein operates within antibiotic biosynthesis; pentalenolactone biosynthesis. Functionally, catalyzes the conversion of 1-deoxypentalenic acid to 11-beta-hydroxy-1-deoxypentalenic acid in the biosynthesis of pentalenolactone antibiotic. This chain is 1-deoxypentalenic acid 11-beta-hydroxylase (penH), found in Streptomyces exfoliatus (Streptomyces hydrogenans).